The sequence spans 610 residues: Scarecrow-like protein 11 (610 aa).

Disordered regions lie at residues 32–54 (NNLF…PPTV), 98–159 (QQSP…RRNK), and 186–220 (QEEE…HKTN). 2 stretches are compositionally biased toward low complexity: residues 41–52 (SQNQSSPNDSPP) and 99–119 (QSPE…GDQD). 2 stretches are compositionally biased toward polar residues: residues 123–137 (PSTT…SSGE) and 209–220 (GSSNKSKTHKTN). A GRAS domain is found at 215–598 (KTHKTNTVDL…RVIYAFSCWK (384 aa)). The tract at residues 222 to 283 (VDLRSLLTQC…ARITGNISPP (62 aa)) is leucine repeat I (LRI). Positions 302 to 367 (YKLFVHTCPI…GGPPMLRVTG (66 aa)) are VHIID. The VHIID signature appears at 333-337 (LHIVD). The interval 383–415 (ETGRRLKRFCDQFNVPFEFNFIAKKWETITLDE) is leucine repeat II (LRII). Residues 424 to 520 (TVVNCIHRLQ…RELLVRDAMS (97 aa)) form a PFYRE region. The tract at residues 523–598 (SCEGAERFAR…RVIYAFSCWK (76 aa)) is SAW.

It belongs to the GRAS family. In terms of tissue distribution, highly expressed in roots and at lower levels in leaves and sepals. Expressed in siliques.

It is found in the nucleus. Probable transcription factor involved in plant development. This Arabidopsis thaliana (Mouse-ear cress) protein is Scarecrow-like protein 11 (SCL11).